Consider the following 186-residue polypeptide: RNA-free ribonuclease P (186 aa).

Belongs to the HARP family.

It catalyses the reaction Endonucleolytic cleavage of RNA, removing 5'-extranucleotides from tRNA precursor.. RNA-free RNase P that catalyzes the removal of the 5'-leader sequence from pre-tRNA to produce the mature 5'-terminus. The chain is RNA-free ribonuclease P from Hydrogenobaculum sp. (strain Y04AAS1).